The chain runs to 208 residues: Protein-L-isoaspartate O-methyltransferase (208 aa).

Residue Ser-59 is part of the active site.

It belongs to the methyltransferase superfamily. L-isoaspartyl/D-aspartyl protein methyltransferase family.

Its subcellular location is the cytoplasm. It catalyses the reaction [protein]-L-isoaspartate + S-adenosyl-L-methionine = [protein]-L-isoaspartate alpha-methyl ester + S-adenosyl-L-homocysteine. Catalyzes the methyl esterification of L-isoaspartyl residues in peptides and proteins that result from spontaneous decomposition of normal L-aspartyl and L-asparaginyl residues. It plays a role in the repair and/or degradation of damaged proteins. The polypeptide is Protein-L-isoaspartate O-methyltransferase (Escherichia coli (strain K12 / MC4100 / BW2952)).